Consider the following 40-residue polypeptide: uncharacterized protein (40 aa).

This is an uncharacterized protein from Myxococcus xanthus (strain DK1622).